Consider the following 804-residue polypeptide: Phenylalanine--tRNA ligase beta subunit (804 aa).

In terms of domain architecture, tRNA-binding spans 38 to 148; that stretch reads RSYLKGFVIA…EDVPIGASFA (111 aa). One can recognise a B5 domain in the interval 401-476; that stretch reads PEIRQITFPL…RIYGLDKIKP (76 aa). Mg(2+) is bound by residues D454, D460, E463, and E464. The FDX-ACB domain occupies 710-803; sequence SSLQMVRRDF…VTRMTGASLR (94 aa).

It belongs to the phenylalanyl-tRNA synthetase beta subunit family. Type 1 subfamily. In terms of assembly, tetramer of two alpha and two beta subunits. Mg(2+) serves as cofactor.

The protein resides in the cytoplasm. The catalysed reaction is tRNA(Phe) + L-phenylalanine + ATP = L-phenylalanyl-tRNA(Phe) + AMP + diphosphate + H(+). The chain is Phenylalanine--tRNA ligase beta subunit from Bartonella henselae (strain ATCC 49882 / DSM 28221 / CCUG 30454 / Houston 1) (Rochalimaea henselae).